Consider the following 187-residue polypeptide: Serine/arginine-rich splicing factor RSZ21 (187 aa).

Positions 2 to 73 constitute an RRM domain; it reads TRVYVGNLDP…WRVELSHKDK (72 aa). 2 disordered regions span residues 68–89 and 105–187; these read LSHK…IEDS and RRGR…ANGV. Residues 89–106 form a CCHC-type zinc finger; the sequence is SKCYECGELGHFARECRR. Over residues 107–122 the composition is skewed to basic residues; the sequence is GRGSVRRRSPSPRRRR. 6 positions are modified to phosphoserine: serine 123, serine 132, serine 134, serine 140, serine 146, and serine 159. Positions 136–155 are enriched in basic residues; that stretch reads RGRRSPPRRRSVTPPRRGRS. Over residues 165–177 the composition is skewed to basic and acidic residues; that stretch reads SRRDSPRRRDSPY. A compositionally biased stretch (low complexity) spans 178–187; sequence GRRSPYANGV. At serine 181 the chain carries Phosphoserine.

The protein belongs to the splicing factor SR family. RSZ subfamily. As to quaternary structure, component of the spliceosome. Interacts with SNRNP35, AFC2, CYP59, RS2Z33 and RNU1. Interacts with MOS14. In terms of processing, extensively phosphorylated on serine residues in the RS domain. Phosphorylated by AFC2. As to expression, expressed in roots, leaves, flowers and siliques.

Its subcellular location is the nucleus speckle. In terms of biological role, probably involved in intron recognition and spliceosome assembly. The chain is Serine/arginine-rich splicing factor RSZ21 (RSZ21) from Arabidopsis thaliana (Mouse-ear cress).